The sequence spans 117 residues: Phosphoribosyl-ATP pyrophosphatase (117 aa).

Residues 96-105 show a composition bias toward basic and acidic residues; it reads GVSGIEEKLS. A disordered region spans residues 96-117; that stretch reads GVSGIEEKLSRSQNQPEPTKAE. Polar residues predominate over residues 106 to 117; it reads RSQNQPEPTKAE.

It belongs to the PRA-PH family.

The protein localises to the cytoplasm. It carries out the reaction 1-(5-phospho-beta-D-ribosyl)-ATP + H2O = 1-(5-phospho-beta-D-ribosyl)-5'-AMP + diphosphate + H(+). The protein operates within amino-acid biosynthesis; L-histidine biosynthesis; L-histidine from 5-phospho-alpha-D-ribose 1-diphosphate: step 2/9. The protein is Phosphoribosyl-ATP pyrophosphatase of Nitrosomonas eutropha (strain DSM 101675 / C91 / Nm57).